Here is a 223-residue protein sequence, read N- to C-terminus: uncharacterized protein (223 aa).

A C4-type zinc finger spans residues 33 to 67 (CPICGGKGTLKAIQFIHRIPYFGEVMESTVVCERC).

The protein belongs to the ZPR1 family.

This is an uncharacterized protein from Pyrococcus horikoshii (strain ATCC 700860 / DSM 12428 / JCM 9974 / NBRC 100139 / OT-3).